A 660-amino-acid chain; its full sequence is WD repeat-containing protein 48 homolog (660 aa).

WD repeat units follow at residues 23–78, 84–120, 123–162, 174–213, 216–255, 258–297, 300–341, and 362–401; these read MHRS…RDLH, HHTD…CMST, THRD…KLTA, GNKD…KLMK, GHTD…CISS, CHSE…TAQL, IEDA…ISVE, and PGAA…KVCD.

This sequence belongs to the WD repeat WDR48 family.

Regulator of deubiquitinating complexes. Activates deubiquitination by increasing the catalytic turnover without increasing the affinity of deubiquitinating enzymes for the substrate. This Brugia malayi (Filarial nematode worm) protein is WD repeat-containing protein 48 homolog.